Here is a 141-residue protein sequence, read N- to C-terminus: Large ribosomal subunit protein uL11 (141 aa).

It belongs to the universal ribosomal protein uL11 family. In terms of assembly, part of the ribosomal stalk of the 50S ribosomal subunit. Interacts with L10 and the large rRNA to form the base of the stalk. L10 forms an elongated spine to which L12 dimers bind in a sequential fashion forming a multimeric L10(L12)X complex. One or more lysine residues are methylated.

In terms of biological role, forms part of the ribosomal stalk which helps the ribosome interact with GTP-bound translation factors. This chain is Large ribosomal subunit protein uL11, found in Amoebophilus asiaticus (strain 5a2).